The sequence spans 234 residues: Small ribosomal subunit protein uS3 (234 aa).

The 69-residue stretch at 39–107 (IRKFLKKELY…EVSINIKEVK (69 aa)) folds into the KH type-2 domain.

Belongs to the universal ribosomal protein uS3 family. Part of the 30S ribosomal subunit. Forms a tight complex with proteins S10 and S14.

In terms of biological role, binds the lower part of the 30S subunit head. Binds mRNA in the 70S ribosome, positioning it for translation. The sequence is that of Small ribosomal subunit protein uS3 from Helicobacter acinonychis (strain Sheeba).